Reading from the N-terminus, the 283-residue chain is Phosphatidylglycerol--prolipoprotein diacylglyceryl transferase (283 aa).

The next 4 membrane-spanning stretches (helical) occupy residues 17–37 (LAVR…TFLG), 56–76 (FLTW…VLFY), 92–112 (WEGG…IWLF), and 117–137 (GIGF…GLAS). Arginine 139 is an a 1,2-diacyl-sn-glycero-3-phospho-(1'-sn-glycerol) binding site. A run of 3 helical transmembrane segments spans residues 194 to 214 (PSQL…VWLF), 222 to 242 (GQVA…AEFA), and 255 to 275 (GLSM…VGFV).

It belongs to the Lgt family.

Its subcellular location is the cell inner membrane. It carries out the reaction L-cysteinyl-[prolipoprotein] + a 1,2-diacyl-sn-glycero-3-phospho-(1'-sn-glycerol) = an S-1,2-diacyl-sn-glyceryl-L-cysteinyl-[prolipoprotein] + sn-glycerol 1-phosphate + H(+). The protein operates within protein modification; lipoprotein biosynthesis (diacylglyceryl transfer). Functionally, catalyzes the transfer of the diacylglyceryl group from phosphatidylglycerol to the sulfhydryl group of the N-terminal cysteine of a prolipoprotein, the first step in the formation of mature lipoproteins. In Neisseria meningitidis serogroup C / serotype 2a (strain ATCC 700532 / DSM 15464 / FAM18), this protein is Phosphatidylglycerol--prolipoprotein diacylglyceryl transferase.